The chain runs to 163 residues: Adenosine 5'-monophosphoramidase HINT2 (163 aa).

Residues 1–17 constitute a mitochondrion transit peptide; it reads MAAAVLLAVGLRAARRT. N6-succinyllysine is present on Lys-45. The 109-residue stretch at 55 to 163 folds into the HIT domain; sequence IFSRILDRSL…GGRQLQWPPG (109 aa). Residues Ser-63 and Asp-80 each coordinate AMP. An N6-acetyllysine modification is found at Lys-119. Lys-128 bears the N6-acetyllysine; alternate mark. N6-succinyllysine; alternate is present on Lys-128. Asn-136 lines the AMP pocket. Lys-139 bears the N6-acetyllysine mark. AMP contacts are provided by residues 142–145 and 149–151; these read AQSV and HIH. Positions 147–151 match the Histidine triad motif motif; it reads HLHIH. The active-site Tele-AMP-histidine intermediate is the His-149.

Belongs to the HINT family.

The protein localises to the mitochondrion. It carries out the reaction adenosine 5'-phosphoramidate + H2O = AMP + NH4(+). Its function is as follows. Exhibits adenosine 5'-monophosphoramidase activity, hydrolyzing purine nucleotide phosphoramidates with a single phosphate group such as adenosine 5'monophosphoramidate (AMP-NH2) to yield AMP and NH2. Hydrolyzes adenosine 5'-O-p-nitrophenylphosphoramidate (AMP-pNA). May be involved in steroid biosynthesis. May play a role in apoptosis. This is Adenosine 5'-monophosphoramidase HINT2 from Mus musculus (Mouse).